Here is a 229-residue protein sequence, read N- to C-terminus: MVEFTKRLLLERNFERTNRPITGPIVVHAVAGAGKSSVINTVSLTFQLICWTTLPEEKASFNCLHLRHLDGPAFPGAFVDEYQLADTDLSEAAFLFGDPLQYPGPAAQVPHFVKLFSHRCGLNSASLIRELGIAFEASKLDSVQHLDPYSSDPEGTILAFEPEVQAALASHSLDFLCLDEFRGKQWPVCTLYVSTKNLCDLDRPSVYVALTRHYERLLIMSFDAADTSA.

A (+)RNA virus helicase ATP-binding domain is found at 1-114 (MVEFTKRLLL…PAAQVPHFVK (114 aa)). The (+)RNA virus helicase C-terminal domain maps to 115-229 (LFSHRCGLNS…MSFDAADTSA (115 aa)).

It belongs to the Tymovirales TGBp1 protein family. As to quaternary structure, homodimer and homooligomer. Interacts with capsid protein. Interacts with host AGO1; this interaction targets the host protein for degradation, thereby suppressing the antiviral RNA silencing.

It is found in the host cytoplasm. Its function is as follows. Transports viral genome to neighboring plant cells directly through plasmosdesmata, without any budding. The movement protein allows efficient cell to cell propagation, by bypassing the host cell wall barrier. Increases plasmodesma size exclusion limit. Acts as a suppressor of RNA-mediated gene silencing, also known as post-transcriptional gene silencing (PTGS), a mechanism of plant viral defense that limits the accumulation of viral RNAs. This is Movement and silencing protein TGBp1 from Strawberry mild yellow edge-associated virus (SMYEaV).